Consider the following 189-residue polypeptide: Probable DNA-directed RNA polymerase subunit delta (189 aa).

Residues 14–81 (LSMIEVAHAI…GENVWALRTW (68 aa)) enclose the HTH HARE-type domain. Acidic residues-rich tracts occupy residues 90–100 (EVDHPEDDGDE) and 118–189 (EGDD…EDEE). Residues 90–189 (EVDHPEDDGD…DDLDDDEDEE (100 aa)) form a disordered region.

The protein belongs to the RpoE family. As to quaternary structure, RNAP is composed of a core of 2 alpha, a beta and a beta' subunits. The core is associated with a delta subunit and one of several sigma factors.

Its function is as follows. Participates in both the initiation and recycling phases of transcription. In the presence of the delta subunit, RNAP displays an increased specificity of transcription, a decreased affinity for nucleic acids, and an increased efficiency of RNA synthesis because of enhanced recycling. In Lactobacillus delbrueckii subsp. bulgaricus (strain ATCC BAA-365 / Lb-18), this protein is Probable DNA-directed RNA polymerase subunit delta.